Consider the following 61-residue polypeptide: DNA gyrase inhibitor YacG (61 aa).

Cysteine 14, cysteine 17, cysteine 29, and cysteine 33 together coordinate Zn(2+).

Belongs to the DNA gyrase inhibitor YacG family. As to quaternary structure, interacts with GyrB. Zn(2+) is required as a cofactor.

Functionally, inhibits all the catalytic activities of DNA gyrase by preventing its interaction with DNA. Acts by binding directly to the C-terminal domain of GyrB, which probably disrupts DNA binding by the gyrase. This chain is DNA gyrase inhibitor YacG, found in Zymomonas mobilis subsp. mobilis (strain ATCC 31821 / ZM4 / CP4).